The chain runs to 643 residues: 1-deoxy-D-xylulose-5-phosphate synthase (643 aa).

Thiamine diphosphate contacts are provided by residues His-71 and 112 to 114; that span reads SHA. Asp-144 contacts Mg(2+). Thiamine diphosphate is bound by residues 145–146, Asn-173, Tyr-284, and Glu-365; that span reads GA. Asn-173 serves as a coordination point for Mg(2+).

The protein belongs to the transketolase family. DXPS subfamily. Homodimer. Requires Mg(2+) as cofactor. Thiamine diphosphate is required as a cofactor.

It catalyses the reaction D-glyceraldehyde 3-phosphate + pyruvate + H(+) = 1-deoxy-D-xylulose 5-phosphate + CO2. It functions in the pathway metabolic intermediate biosynthesis; 1-deoxy-D-xylulose 5-phosphate biosynthesis; 1-deoxy-D-xylulose 5-phosphate from D-glyceraldehyde 3-phosphate and pyruvate: step 1/1. Its function is as follows. Catalyzes the acyloin condensation reaction between C atoms 2 and 3 of pyruvate and glyceraldehyde 3-phosphate to yield 1-deoxy-D-xylulose-5-phosphate (DXP). The polypeptide is 1-deoxy-D-xylulose-5-phosphate synthase (Mycobacterium leprae (strain Br4923)).